We begin with the raw amino-acid sequence, 286 residues long: ATP synthase gamma chain (286 aa).

The protein belongs to the ATPase gamma chain family. F-type ATPases have 2 components, CF(1) - the catalytic core - and CF(0) - the membrane proton channel. CF(1) has five subunits: alpha(3), beta(3), gamma(1), delta(1), epsilon(1). CF(0) has three main subunits: a, b and c.

Its subcellular location is the cell inner membrane. Functionally, produces ATP from ADP in the presence of a proton gradient across the membrane. The gamma chain is believed to be important in regulating ATPase activity and the flow of protons through the CF(0) complex. The sequence is that of ATP synthase gamma chain from Pseudomonas fluorescens (strain ATCC BAA-477 / NRRL B-23932 / Pf-5).